We begin with the raw amino-acid sequence, 235 residues long: Protein shisa-5 (235 aa).

The signal sequence occupies residues methionine 1 to glycine 26. Residues glutamate 27–glycine 105 lie on the Extracellular side of the membrane. The helical transmembrane segment at phenylalanine 106 to isoleucine 126 threads the bilayer. Residues cysteine 127–proline 235 lie on the Cytoplasmic side of the membrane. The tract at residues alanine 157–proline 235 is disordered. Pro residues-rich tracts occupy residues tyrosine 159–proline 172 and proline 181–tyrosine 211.

The protein belongs to the shisa family. Interacts with PDCD6; PDCD6 can stabilize SHISA5. Spleen and thymus.

The protein resides in the endoplasmic reticulum membrane. Its subcellular location is the nucleus membrane. Functionally, can induce apoptosis in a caspase-dependent manner and plays a role in p53/TP53-dependent apoptosis. The protein is Protein shisa-5 (Shisa5) of Mus musculus (Mouse).